We begin with the raw amino-acid sequence, 868 residues long: Leucine--tRNA ligase (868 aa).

The short motif at 42–52 is the 'HIGH' region element; it reads PYPSGKLHMGH. A 'KMSKS' region motif is present at residues 627-631; the sequence is KMSKS. Lysine 630 is an ATP binding site.

The protein belongs to the class-I aminoacyl-tRNA synthetase family.

The protein localises to the cytoplasm. It carries out the reaction tRNA(Leu) + L-leucine + ATP = L-leucyl-tRNA(Leu) + AMP + diphosphate. The protein is Leucine--tRNA ligase of Pseudomonas savastanoi pv. phaseolicola (strain 1448A / Race 6) (Pseudomonas syringae pv. phaseolicola (strain 1448A / Race 6)).